The chain runs to 137 residues: Large ribosomal subunit protein uL16c (137 aa).

It belongs to the universal ribosomal protein uL16 family. As to quaternary structure, part of the 50S ribosomal subunit.

Its subcellular location is the plastid. This is Large ribosomal subunit protein uL16c from Cuscuta reflexa (Southern Asian dodder).